The primary structure comprises 398 residues: tRNA-specific 2-thiouridylase MnmA (398 aa).

Residues 18–25 and Leu44 contribute to the ATP site; that span reads AMSGGVDS. The active-site Nucleophile is the Cys112. Residues Cys112 and Cys213 are joined by a disulfide bond. Residue Gly136 coordinates ATP. The interval 163–165 is interaction with tRNA; the sequence is RDQ. The active-site Cysteine persulfide intermediate is Cys213.

The protein belongs to the MnmA/TRMU family.

The protein resides in the cytoplasm. It carries out the reaction S-sulfanyl-L-cysteinyl-[protein] + uridine(34) in tRNA + AH2 + ATP = 2-thiouridine(34) in tRNA + L-cysteinyl-[protein] + A + AMP + diphosphate + H(+). Functionally, catalyzes the 2-thiolation of uridine at the wobble position (U34) of tRNA, leading to the formation of s(2)U34. This is tRNA-specific 2-thiouridylase MnmA from Rhizobium meliloti (strain 1021) (Ensifer meliloti).